We begin with the raw amino-acid sequence, 228 residues long: Delta-type opioid receptor (228 aa).

The helical transmembrane segment at 1–3 threads the bilayer; sequence GIV. Residues 4–13 lie on the Cytoplasmic side of the membrane; sequence RYTKMKTATN. A helical transmembrane segment spans residues 14–38; it reads IYIFNLALADALATSTLPFQSAKYL. Topologically, residues 39–50 are extracellular; sequence METWPFGELLCK. Cys-49 and Cys-126 are oxidised to a cystine. A helical transmembrane segment spans residues 51 to 72; sequence AVLSIDYYNMFTSIFTLTMMSV. The Cytoplasmic portion of the chain corresponds to 73 to 91; the sequence is DRYIAVCHPVKALDFRTPA. Residues 92-114 traverse the membrane as a helical segment; that stretch reads KAKLINICIWVLASGVGVPIMVM. At 115–134 the chain is on the extracellular side; sequence AVTRPRDGAVVCMLQFPSPS. A helical membrane pass occupies residues 135 to 166; it reads WYWDTVTKICVFLFAFVVPILVITVCYGLMLL. Residues 167–189 lie on the Cytoplasmic side of the membrane; the sequence is RLRSVRLLSGSKEKDRSLRRITR. A helical transmembrane segment spans residues 190 to 212; sequence MVLVVVGAFVVCWAPIHIFVIVW. Residues 213–227 lie on the Extracellular side of the membrane; the sequence is TLVDIDRRDPLVVAA.

The protein belongs to the G-protein coupled receptor 1 family. May form homooligomers. Forms a heterodimer with OPRM1. Interacts with GPRASP1. Interacts with RTP4; the interaction promotes cell surface localization of the OPRD1-OPRM1 heterodimer. Ubiquitinated. A basal ubiquitination seems not to be related to degradation. Ubiquitination is increased upon formation of OPRM1:OPRD1 oligomers leading to proteasomal degradation; the ubiquitination is diminished by RTP4. As to expression, detected in myenteric plexus and smooth muscle (at protein level). Detected in brain and intestine.

The protein resides in the cell membrane. In terms of biological role, G-protein coupled receptor that functions as a receptor for endogenous enkephalins and for a subset of other opioids. Ligand binding causes a conformation change that triggers signaling via guanine nucleotide-binding proteins (G proteins) and modulates the activity of down-stream effectors, such as adenylate cyclase. Signaling leads to the inhibition of adenylate cyclase activity. Inhibits neurotransmitter release by reducing calcium ion currents and increasing potassium ion conductance. Plays a role in the perception of pain and in opiate-mediated analgesia. Plays a role in developing analgesic tolerance to morphine. The polypeptide is Delta-type opioid receptor (OPRD1) (Sus scrofa (Pig)).